Here is a 273-residue protein sequence, read N- to C-terminus: Alcohol dehydrogenase-related 31 kDa protein (273 aa).

11–34 (YVADCGGIALETCKVLMTKNIAKL) lines the NAD(+) pocket. Position 139 (Ser139) interacts with substrate. Tyr152 functions as the Proton acceptor in the catalytic mechanism.

This sequence belongs to the short-chain dehydrogenases/reductases (SDR) family.

In Drosophila immigrans (Fruit fly), this protein is Alcohol dehydrogenase-related 31 kDa protein (Adhr).